The following is an 860-amino-acid chain: Leucine--tRNA ligase (860 aa).

The 'HIGH' region signature appears at 42 to 52 (PYPSGRLHMGH). Positions 619–623 (KMSKS) match the 'KMSKS' region motif. Position 622 (K622) interacts with ATP.

This sequence belongs to the class-I aminoacyl-tRNA synthetase family.

Its subcellular location is the cytoplasm. It carries out the reaction tRNA(Leu) + L-leucine + ATP = L-leucyl-tRNA(Leu) + AMP + diphosphate. In Pectobacterium atrosepticum (strain SCRI 1043 / ATCC BAA-672) (Erwinia carotovora subsp. atroseptica), this protein is Leucine--tRNA ligase.